The chain runs to 293 residues: uncharacterized protein (293 aa).

Residues 1–22 (MTFNEGVQIDTSTTSTSGSGGG) are disordered. A helical transmembrane segment spans residues 25–45 (LAIGGGLGGLLVVVVAMLLGV). The interval 243–265 (GDDRIQQQTTGRTNPETWTHGSA) is disordered. Residues 248–265 (QQQTTGRTNPETWTHGSA) show a composition bias toward polar residues.

Its subcellular location is the membrane. This is an uncharacterized protein from Mycobacterium tuberculosis (strain CDC 1551 / Oshkosh).